Consider the following 1906-residue polypeptide: Serine protease/ABC transporter B family protein tagB (1906 aa).

The N-terminal stretch at 1-31 (MKFQFSSPSKIFLFSSVILILIFIGIKFELL) is a signal peptide. The interval 96–134 (INNNNNNNNKLNNNNNNNNNNNNNNNNNNNNNNNNNNNN) is disordered. The Peptidase S8 domain maps to 356-763 (PTVIFGTKDK…ASSTNPSNAI (408 aa)). Catalysis depends on charge relay system residues D387 and H432. N-linked (GlcNAc...) asparagine glycosylation is found at N594, N621, and N672. The active-site Charge relay system is the S695. N-linked (GlcNAc...) asparagine glycosylation is found at N747 and N823. The next 3 helical transmembrane spans lie at 1011–1031 (YIII…LMWI), 1076–1096 (FIIE…ASIL), and 1121–1141 (FIII…GSWI). Residues 1080 to 1363 (LTIATACSLV…LFGVYVSYIQ (284 aa)) form the ABC transmembrane type-1 domain. N-linked (GlcNAc...) asparagine glycosylation is present at N1172. The next 3 membrane-spanning stretches (helical) occupy residues 1210–1230 (LVFI…AVPI), 1309–1329 (WLLI…LVIQ), and 1332–1352 (FTVG…DASS). A disordered region spans residues 1385-1455 (LEEEEADRLA…NNNNNIGNLD (71 aa)). Over residues 1396–1405 (LSGGGGGGGD) the composition is skewed to gly residues. Positions 1407–1420 (GDDKKDKQNIENGK) are enriched in basic and acidic residues. The region spanning 1518–1756 (IEFKNVSFRY…KGKYYRMFSE (239 aa)) is the ABC transporter domain. A glycan (N-linked (GlcNAc...) asparagine) is linked at N1522. Position 1553 to 1560 (1553 to 1560 (GPSGSGKS)) interacts with ATP. N-linked (GlcNAc...) asparagine glycosylation occurs at N1658. Residues 1757–1906 (DKDDTPLQNN…QMDEENDEER (150 aa)) form a disordered region. Low complexity-rich tracts occupy residues 1765-1779 (NNNN…NNNN) and 1814-1871 (EQQE…DYDQ). The segment covering 1872–1886 (VPPPPPLPSESPSPP) has biased composition (pro residues).

It in the C-terminal section; belongs to the ABC transporter superfamily. ABCB family. Multidrug resistance exporter (TC 3.A.1.201) subfamily. In the N-terminal section; belongs to the peptidase S8 family.

The protein resides in the membrane. In terms of biological role, intercellular communication via tagB may mediate integration of cellular differentiation with morphogenesis. The chain is Serine protease/ABC transporter B family protein tagB (tagB) from Dictyostelium discoideum (Social amoeba).